We begin with the raw amino-acid sequence, 394 residues long: Elongation factor Tu (394 aa).

The tr-type G domain maps to 10–204 (KEHANIGTIG…AVDTYIPTPE (195 aa)). Residues 19–26 (GHVDHGKT) are G1. 19–26 (GHVDHGKT) lines the GTP pocket. Thr26 provides a ligand contact to Mg(2+). The G2 stretch occupies residues 60-64 (GITIN). A G3 region spans residues 81-84 (DCPG). Residues 81-85 (DCPGH) and 136-139 (NKVD) contribute to the GTP site. A G4 region spans residues 136–139 (NKVD). Residues 174-176 (SAL) form a G5 region.

It belongs to the TRAFAC class translation factor GTPase superfamily. Classic translation factor GTPase family. EF-Tu/EF-1A subfamily. In terms of assembly, monomer.

It localises to the cytoplasm. It catalyses the reaction GTP + H2O = GDP + phosphate + H(+). GTP hydrolase that promotes the GTP-dependent binding of aminoacyl-tRNA to the A-site of ribosomes during protein biosynthesis. The protein is Elongation factor Tu of Staphylococcus aureus (strain COL).